The following is a 61-amino-acid chain: Mu-diguetoxin-Dc1c (61 aa).

Disulfide bonds link cysteine 12–cysteine 25, cysteine 19–cysteine 39, and cysteine 24–cysteine 53.

The protein belongs to the neurotoxin 26 (DTX) family. Expressed by the venom gland.

Its subcellular location is the secreted. Acts by delaying the inactivation of presynaptic voltage-sensitive sodium channels (Nav). Acts against insects and causes a progressive spastic paralysis. In Diguetia canities (Desert bush spider), this protein is Mu-diguetoxin-Dc1c.